Here is a 336-residue protein sequence, read N- to C-terminus: Fimbrial adhesin PapGII (336 aa).

The N-terminal stretch at 1–20 (MKKWFPALLFSLCVSGESSA) is a signal peptide. Intrachain disulfides connect C64/C138 and C217/C249. D-galactose contacts are provided by residues E79 and 124–127 (GYKW).

This sequence belongs to the adhesin PapG family.

It localises to the secreted. Its subcellular location is the fimbrium. Functionally, tip adhesin component of type P pili that plays a critical role in kidney infection through targeted interaction with the globoseries glycolipids containing the Gal-alpha(1-4)-Gal disaccharide present on uroepithelial cells. In turn, transcriptionally regulates host gene expression in kidney cells, leading to inflammatory pathway activation and renal tissue damage. Acts thereby as key determinant of invasive uropathogenic E.coli (UPEC), which cause pyelonephritis and urinary-source bacteremia. This chain is Fimbrial adhesin PapGII, found in Escherichia coli.